We begin with the raw amino-acid sequence, 565 residues long: Adenine deaminase 1 (565 aa).

Belongs to the metallo-dependent hydrolases superfamily. Adenine deaminase family. The cofactor is Mn(2+).

The catalysed reaction is adenine + H2O + H(+) = hypoxanthine + NH4(+). This Rhizobium etli (strain ATCC 51251 / DSM 11541 / JCM 21823 / NBRC 15573 / CFN 42) protein is Adenine deaminase 1.